The chain runs to 350 residues: Protein-glutamate methylesterase/protein-glutamine glutaminase (350 aa).

In terms of domain architecture, Response regulatory spans 5–122; sequence KVLCVDDSAL…RDGLIEYSEV (118 aa). D56 carries the post-translational modification 4-aspartylphosphate. The region spanning 152-346 is the CheB-type methylesterase domain; that stretch reads PFASSEKLVI…ERILTRLGDR (195 aa). Catalysis depends on residues S165, H191, and D288.

Belongs to the CheB family. Post-translationally, phosphorylated by CheA. Phosphorylation of the N-terminal regulatory domain activates the methylesterase activity.

The protein resides in the cytoplasm. It carries out the reaction [protein]-L-glutamate 5-O-methyl ester + H2O = L-glutamyl-[protein] + methanol + H(+). It catalyses the reaction L-glutaminyl-[protein] + H2O = L-glutamyl-[protein] + NH4(+). Its function is as follows. Involved in chemotaxis. Part of a chemotaxis signal transduction system that modulates chemotaxis in response to various stimuli. Catalyzes the demethylation of specific methylglutamate residues introduced into the chemoreceptors (methyl-accepting chemotaxis proteins or MCP) by CheR. Also mediates the irreversible deamidation of specific glutamine residues to glutamic acid. This chain is Protein-glutamate methylesterase/protein-glutamine glutaminase, found in Bordetella pertussis (strain Tohama I / ATCC BAA-589 / NCTC 13251).